The chain runs to 320 residues: tRNA pseudouridine synthase B (320 aa).

Asp48 acts as the Nucleophile in catalysis.

Belongs to the pseudouridine synthase TruB family. Type 1 subfamily.

It carries out the reaction uridine(55) in tRNA = pseudouridine(55) in tRNA. In terms of biological role, responsible for synthesis of pseudouridine from uracil-55 in the psi GC loop of transfer RNAs. The sequence is that of tRNA pseudouridine synthase B from Mycobacterium leprae (strain TN).